Here is a 358-residue protein sequence, read N- to C-terminus: Probable protein phosphatase 2C 34 (358 aa).

In terms of domain architecture, PPM-type phosphatase spans 62–349 (LASVFSRRGE…DDISAVCLFF (288 aa)). Residues D98, G99, D294, and D340 each contribute to the Mn(2+) site.

Belongs to the PP2C family. Mg(2+) is required as a cofactor. Mn(2+) serves as cofactor.

The catalysed reaction is O-phospho-L-seryl-[protein] + H2O = L-seryl-[protein] + phosphate. It carries out the reaction O-phospho-L-threonyl-[protein] + H2O = L-threonyl-[protein] + phosphate. The chain is Probable protein phosphatase 2C 34 from Arabidopsis thaliana (Mouse-ear cress).